A 558-amino-acid polypeptide reads, in one-letter code: Hepatocyte nuclear factor 1-beta (558 aa).

Residues 1 to 31 (MVSKLTSLQQELLSALLSSGVTKEVLIQALE) form a dimerization region. Positions 1–32 (MVSKLTSLQQELLSALLSSGVTKEVLIQALEE) constitute an HNF-p1 domain. A phosphoserine mark is found at Ser-49, Ser-52, Ser-75, and Ser-80. The disordered stretch occupies residues 66-85 (TNGHAKGRLSGDEGSEDGDD). Residues 93–188 (KELQALNTEE…ILRQFNQTVQ (96 aa)) enclose the POU-specific atypical domain. The segment at residues 231-311 (MRRNRFKWGP…NRRKEEAFRQ (81 aa)) is a DNA-binding region (homeobox; HNF1-type). Positions 323-348 (THNLNPLLTHGSPHHQPSSSPPNKMS) are disordered.

Belongs to the HNF1 homeobox family. In terms of assembly, binds DNA as a dimer. Can form homodimer or heterodimer with HNF1-alpha. Interacts (via HNF-p1 domain) with PCBD1; the interaction increases its transactivation activity.

It localises to the nucleus. Transcription factor that binds to the inverted palindrome 5'-GTTAATNATTAAC-3'. Binds to the FPC element in the cAMP regulatory unit of the PLAU gene. Transcriptional activity is increased by coactivator PCBD1. The protein is Hepatocyte nuclear factor 1-beta (Hnf1b) of Mus musculus (Mouse).